Here is a 206-residue protein sequence, read N- to C-terminus: Large ribosomal subunit protein bL25 (206 aa).

It belongs to the bacterial ribosomal protein bL25 family. CTC subfamily. In terms of assembly, part of the 50S ribosomal subunit; part of the 5S rRNA/L5/L18/L25 subcomplex. Contacts the 5S rRNA. Binds to the 5S rRNA independently of L5 and L18.

This is one of the proteins that binds to the 5S RNA in the ribosome where it forms part of the central protuberance. This is Large ribosomal subunit protein bL25 from Ralstonia nicotianae (strain ATCC BAA-1114 / GMI1000) (Ralstonia solanacearum).